Reading from the N-terminus, the 336-residue chain is 4-hydroxy-3-methylbut-2-enyl diphosphate reductase (336 aa).

Cysteine 37 is a binding site for [4Fe-4S] cluster. Histidine 66 and histidine 99 together coordinate (2E)-4-hydroxy-3-methylbut-2-enyl diphosphate. Residues histidine 66 and histidine 99 each coordinate dimethylallyl diphosphate. Isopentenyl diphosphate-binding residues include histidine 66 and histidine 99. Cysteine 121 is a [4Fe-4S] cluster binding site. Histidine 149 contacts (2E)-4-hydroxy-3-methylbut-2-enyl diphosphate. Dimethylallyl diphosphate is bound at residue histidine 149. Residue histidine 149 coordinates isopentenyl diphosphate. Glutamate 151 functions as the Proton donor in the catalytic mechanism. Threonine 189 is a binding site for (2E)-4-hydroxy-3-methylbut-2-enyl diphosphate. Position 219 (cysteine 219) interacts with [4Fe-4S] cluster. Residues serine 247, serine 248, asparagine 249, and serine 292 each coordinate (2E)-4-hydroxy-3-methylbut-2-enyl diphosphate. 4 residues coordinate dimethylallyl diphosphate: serine 247, serine 248, asparagine 249, and serine 292. Isopentenyl diphosphate is bound by residues serine 247, serine 248, asparagine 249, and serine 292.

Belongs to the IspH family. The cofactor is [4Fe-4S] cluster.

It carries out the reaction isopentenyl diphosphate + 2 oxidized [2Fe-2S]-[ferredoxin] + H2O = (2E)-4-hydroxy-3-methylbut-2-enyl diphosphate + 2 reduced [2Fe-2S]-[ferredoxin] + 2 H(+). The catalysed reaction is dimethylallyl diphosphate + 2 oxidized [2Fe-2S]-[ferredoxin] + H2O = (2E)-4-hydroxy-3-methylbut-2-enyl diphosphate + 2 reduced [2Fe-2S]-[ferredoxin] + 2 H(+). Its pathway is isoprenoid biosynthesis; dimethylallyl diphosphate biosynthesis; dimethylallyl diphosphate from (2E)-4-hydroxy-3-methylbutenyl diphosphate: step 1/1. The protein operates within isoprenoid biosynthesis; isopentenyl diphosphate biosynthesis via DXP pathway; isopentenyl diphosphate from 1-deoxy-D-xylulose 5-phosphate: step 6/6. Functionally, catalyzes the conversion of 1-hydroxy-2-methyl-2-(E)-butenyl 4-diphosphate (HMBPP) into a mixture of isopentenyl diphosphate (IPP) and dimethylallyl diphosphate (DMAPP). Acts in the terminal step of the DOXP/MEP pathway for isoprenoid precursor biosynthesis. This Rhodococcus opacus (strain B4) protein is 4-hydroxy-3-methylbut-2-enyl diphosphate reductase.